The chain runs to 165 residues: Protein SEED AND ROOT HAIR PROTECTIVE PROTEIN (165 aa).

The N-terminal stretch at 1-24 (MAFSRLSFAASLIVFSSLIISSVA) is a signal peptide.

Belongs to the plant proline-rich protein superfamily. In terms of tissue distribution, root hair and seed specific expression. Also observed in other tissues including siliques, roots and flowers.

The protein resides in the secreted. The protein localises to the cell wall. Contributes to cell wall structure in root hairs and seeds, especially in phosphate (Pi) deprivation conditions or in the presence of ethylene. Particularly important in maternal tissues (pericarps and seed coats) during seed development, especially under stress conditions. Confers thermotolerance in seed germination rate. The chain is Protein SEED AND ROOT HAIR PROTECTIVE PROTEIN from Arabidopsis thaliana (Mouse-ear cress).